We begin with the raw amino-acid sequence, 363 residues long: Aminomethyltransferase (363 aa).

The protein belongs to the GcvT family. In terms of assembly, the glycine cleavage system is composed of four proteins: P, T, L and H.

It catalyses the reaction N(6)-[(R)-S(8)-aminomethyldihydrolipoyl]-L-lysyl-[protein] + (6S)-5,6,7,8-tetrahydrofolate = N(6)-[(R)-dihydrolipoyl]-L-lysyl-[protein] + (6R)-5,10-methylene-5,6,7,8-tetrahydrofolate + NH4(+). In terms of biological role, the glycine cleavage system catalyzes the degradation of glycine. This Teredinibacter turnerae (strain ATCC 39867 / T7901) protein is Aminomethyltransferase.